The chain runs to 393 residues: 8-amino-7-oxononanoate synthase (393 aa).

Residue 108–109 (GF) participates in pyridoxal 5'-phosphate binding. H133 is a substrate binding site. Pyridoxal 5'-phosphate is bound by residues S182, 207–210 (DDAH), and 238–241 (TLSK). The residue at position 241 (K241) is an N6-(pyridoxal phosphate)lysine. T355 is a substrate binding site.

This sequence belongs to the class-II pyridoxal-phosphate-dependent aminotransferase family. BioF subfamily. Homodimer. Requires pyridoxal 5'-phosphate as cofactor.

It carries out the reaction 6-carboxyhexanoyl-[ACP] + L-alanine + H(+) = (8S)-8-amino-7-oxononanoate + holo-[ACP] + CO2. Its pathway is cofactor biosynthesis; biotin biosynthesis. In terms of biological role, catalyzes the decarboxylative condensation of pimeloyl-[acyl-carrier protein] and L-alanine to produce 8-amino-7-oxononanoate (AON), [acyl-carrier protein], and carbon dioxide. This chain is 8-amino-7-oxononanoate synthase, found in Petrotoga mobilis (strain DSM 10674 / SJ95).